The primary structure comprises 315 residues: NAD-dependent protein lipoamidase sirtuin-4, mitochondrial (315 aa).

The transit peptide at 1–29 (MRMSFGLTFKRTAKVHWRANFSQQCSLRS) directs the protein to the mitochondrion. The Deacetylase sirtuin-type domain occupies 38–315 (PPLDPEKVKE…GELLPLIDPR (278 aa)). NAD(+) contacts are provided by residues 63-83 (GAGI…VGLY) and 144-147 (QNVD). Residue His-162 is the Proton acceptor of the active site. Cys-170, Cys-173, Cys-221, and Cys-224 together coordinate Zn(2+). NAD(+)-binding positions include 261–263 (GSS), 287–289 (NIG), and Cys-305.

It belongs to the sirtuin family. Class II subfamily. In terms of assembly, interacts with GLUD1, IDE and SLC25A5. Interacts with DLAT and PDHX. Interacts with MCCC1 (via the biotin carboxylation domain). Interacts with PCCA and PC. Zn(2+) is required as a cofactor.

Its subcellular location is the mitochondrion matrix. It carries out the reaction N(6)-[(R)-lipoyl]-L-lysyl-[protein] + NAD(+) + H2O = 2''-O-lipoyl-ADP-D-ribose + nicotinamide + L-lysyl-[protein]. The enzyme catalyses N(6)-biotinyl-L-lysyl-[protein] + NAD(+) + H2O = 2''-O-biotinyl-ADP-D-ribose + nicotinamide + L-lysyl-[protein]. The catalysed reaction is N(6)-acetyl-L-lysyl-[protein] + NAD(+) + H2O = 2''-O-acetyl-ADP-D-ribose + nicotinamide + L-lysyl-[protein]. It catalyses the reaction L-cysteinyl-[protein] + NAD(+) = S-(ADP-D-ribosyl)-L-cysteinyl-[protein] + nicotinamide + H(+). Acts as a NAD-dependent protein lipoamidase, biotinylase, deacetylase and ADP-ribosyl transferase. Catalyzes more efficiently removal of lipoyl- and biotinyl- than acetyl-lysine modifications. Inhibits the pyruvate dehydrogenase complex (PDH) activity via the enzymatic hydrolysis of the lipoamide cofactor from the E2 component, DLAT, in a phosphorylation-independent manner. Catalyzes the transfer of ADP-ribosyl groups onto target proteins, including mitochondrial GLUD1, inhibiting GLUD1 enzyme activity. Acts as a negative regulator of mitochondrial glutamine metabolism by mediating mono ADP-ribosylation of GLUD1: expressed in response to DNA damage and negatively regulates anaplerosis by inhibiting GLUD1, leading to block metabolism of glutamine into tricarboxylic acid cycle and promoting cell cycle arrest. In response to mTORC1 signal, SIRT4 expression is repressed, promoting anaplerosis and cell proliferation. Acts as a tumor suppressor. Also acts as a NAD-dependent protein deacetylase: mediates deacetylation of 'Lys-471' of MLYCD, inhibiting its activity, thereby acting as a regulator of lipid homeostasis. Does not seem to deacetylate PC. Controls fatty acid oxidation by inhibiting PPARA transcriptional activation. Impairs SIRT1-PPARA interaction probably through the regulation of NAD(+) levels. Down-regulates insulin secretion. This Bos taurus (Bovine) protein is NAD-dependent protein lipoamidase sirtuin-4, mitochondrial.